The chain runs to 484 residues: NADH-quinone oxidoreductase subunit N (484 aa).

13 helical membrane-spanning segments follow: residues 10 to 30, 40 to 60, 74 to 94, 108 to 128, 129 to 149, 163 to 183, 203 to 223, 237 to 257, 272 to 292, 299 to 319, 327 to 347, 370 to 390, and 404 to 424; these read LALP…VDLF, FYLT…TQWG, SLGA…LAYT, FYLL…GGSL, LSLY…VAYH, FVLG…VYGA, LMLL…LGAA, PTPV…ALFM, EPML…IAIV, MLAY…TAGT, LFYT…ITVL, YAGV…TVGF, and GHIP…FYYL.

It belongs to the complex I subunit 2 family. NDH-1 is composed of 14 different subunits. Subunits NuoA, H, J, K, L, M, N constitute the membrane sector of the complex.

It is found in the cell inner membrane. The enzyme catalyses a quinone + NADH + 5 H(+)(in) = a quinol + NAD(+) + 4 H(+)(out). Its function is as follows. NDH-1 shuttles electrons from NADH, via FMN and iron-sulfur (Fe-S) centers, to quinones in the respiratory chain. The immediate electron acceptor for the enzyme in this species is believed to be ubiquinone. Couples the redox reaction to proton translocation (for every two electrons transferred, four hydrogen ions are translocated across the cytoplasmic membrane), and thus conserves the redox energy in a proton gradient. The sequence is that of NADH-quinone oxidoreductase subunit N from Halorhodospira halophila (strain DSM 244 / SL1) (Ectothiorhodospira halophila (strain DSM 244 / SL1)).